The primary structure comprises 474 residues: Membrane-bound acylglycerophosphatidylinositol O-acyltransferase mboat7 (474 aa).

Topologically, residues 1–5 (MSPNE) are cytoplasmic. A helical transmembrane segment spans residues 6–22 (LTYLAILLGSAPLGFLF). The Lumenal segment spans residues 23-33 (KNGSPQVKQRG). Residues 34 to 57 (SAAVGVALTLITCHIHSLHSAITI) form a helical membrane-spanning segment. Residues 58 to 73 (LGTWLIIKILPRSCHF) are Cytoplasmic-facing. A helical transmembrane segment spans residues 74 to 93 (PTLGWTFTYLLFFRTITYFD). Topologically, residues 94–193 (IPAPTPFTNA…IPSWKPLVSR (100 aa)) are lumenal. A helical membrane pass occupies residues 194-211 (LKPAPVFGVLFLIASQYF). The Cytoplasmic portion of the chain corresponds to 212–230 (PLDYVKTDEFYEQAFLYRL). Residues 231 to 260 (FYMVPTFFIFRMRFYVAWIFAECGCISAAF) form a helical membrane-spanning segment. Topologically, residues 261-427 (GAYPVSAKSR…LTFTDTYRYW (167 aa)) are lumenal. The N-linked (GlcNAc...) asparagine glycan is linked to asparagine 322. A helical transmembrane segment spans residues 428 to 448 (QSIYFSVHVLAISLFLLGRVL). Residues 449 to 473 (ALKSPRRPRNTKEEKAEAKQENRLQ) lie on the Cytoplasmic side of the membrane.

It belongs to the membrane-bound acyltransferase family.

The protein localises to the endoplasmic reticulum membrane. It catalyses the reaction a 1-acyl-sn-glycero-3-phospho-(1D-myo-inositol) + (5Z,8Z,11Z,14Z)-eicosatetraenoyl-CoA = a 1-acyl-2-(5Z,8Z,11Z,14Z-eicosatetraenoyl)-sn-glycero-3-phospho-(1D-myo-inositol) + CoA. The enzyme catalyses (5Z,8Z,11Z,14Z)-eicosatetraenoyl-CoA + 1-hexadecanoyl-sn-glycero-3-phosphocholine = 1-hexadecanoyl-2-(5Z,8Z,11Z,14Z-eicosatetraenoyl)-sn-glycero-3-phosphocholine + CoA. It carries out the reaction a 1-acyl-sn-glycero-3-phospho-(1D-myo-inositol) + an acyl-CoA = a 1,2-diacyl-sn-glycero-3-phospho-(1D-myo-inositol) + CoA. The catalysed reaction is 1-octadecanoyl-sn-glycero-3-phospho-(1D-myo-inositol) + (5Z,8Z,11Z,14Z)-eicosatetraenoyl-CoA = 1-octadecanoyl-2-(5Z,8Z,11Z,14Z-eicosatetraenoyl)-sn-glycero-3-phospho-(1D-myo-inositol) + CoA. The protein operates within lipid metabolism; phospholipid metabolism. In terms of biological role, acyltransferase which catalyzes the transfer of an acyl group from an acyl-CoA to a lysophosphatidylinositol (1-acylglycerophosphatidylinositol or LPI) leading to the production of a phosphatidylinositol (1,2-diacyl-sn-glycero-3-phosphoinositol or PI) and participates in the reacylation step of the phospholipid remodeling pathway also known as the Lands cycle. Prefers arachidonoyl-CoA as the acyl donor, thus contributing to the regulation of free levels arachidonic acid in cell. The sequence is that of Membrane-bound acylglycerophosphatidylinositol O-acyltransferase mboat7 (mboat7) from Xenopus laevis (African clawed frog).